A 358-amino-acid chain; its full sequence is Photosystem II protein D1 1 (358 aa).

A run of 3 helical transmembrane segments spans residues 28–45 (YVGWFGVLMIPCLLAATI), 117–132 (HFLIGISAYMGRQWEL), and 141–155 (WICVAYSAPLSAAFA). H117 provides a ligand contact to chlorophyll a. A pheophytin a-binding site is contributed by Y125. Positions 169 and 188 each coordinate [CaMn4O5] cluster. Residues 196-217 (FHMLGVAGVFGGSLFSAMHGSL) form a helical membrane-spanning segment. H197 serves as a coordination point for chlorophyll a. A quinone is bound by residues H214 and 263 to 264 (SF). Position 214 (H214) interacts with Fe cation. H271 serves as a coordination point for Fe cation. Residues 273-287 (FLGAWPVIGIWFTSM) form a helical membrane-spanning segment. Residues H331, E332, D341, and A343 each contribute to the [CaMn4O5] cluster site. Residues 344–358 (AAESTPVALQAPAIG) constitute a propeptide that is removed on maturation.

Belongs to the reaction center PufL/M/PsbA/D family. PSII is composed of 1 copy each of membrane proteins PsbA, PsbB, PsbC, PsbD, PsbE, PsbF, PsbH, PsbI, PsbJ, PsbK, PsbL, PsbM, PsbT, PsbX, PsbY, PsbZ, Psb30/Ycf12, peripheral proteins PsbO, CyanoQ (PsbQ), PsbU, PsbV and a large number of cofactors. It forms dimeric complexes. The D1/D2 heterodimer binds P680, chlorophylls that are the primary electron donor of PSII, and subsequent electron acceptors. It shares a non-heme iron and each subunit binds pheophytin, quinone, additional chlorophylls, carotenoids and lipids. D1 provides most of the ligands for the Mn4-Ca-O5 cluster of the oxygen-evolving complex (OEC). There is also a Cl(-1) ion associated with D1 and D2, which is required for oxygen evolution. The PSII complex binds additional chlorophylls, carotenoids and specific lipids. is required as a cofactor. Tyr-160 forms a radical intermediate that is referred to as redox-active TyrZ, YZ or Y-Z. In terms of processing, C-terminally processed by CtpA; processing is essential to allow assembly of the oxygen-evolving complex and thus photosynthetic growth.

Its subcellular location is the cellular thylakoid membrane. The catalysed reaction is 2 a plastoquinone + 4 hnu + 2 H2O = 2 a plastoquinol + O2. Photosystem II (PSII) is a light-driven water:plastoquinone oxidoreductase that uses light energy to abstract electrons from H(2)O, generating O(2) and a proton gradient subsequently used for ATP formation. It consists of a core antenna complex that captures photons, and an electron transfer chain that converts photonic excitation into a charge separation. The D1/D2 (PsbA/PsbD) reaction center heterodimer binds P680, the primary electron donor of PSII as well as several subsequent electron acceptors. This chain is Photosystem II protein D1 1, found in Synechococcus sp. (strain CC9902).